A 465-amino-acid chain; its full sequence is Hexokinase-4 (465 aa).

One can recognise a Hexokinase domain in the interval 10 to 454; it reads ATKKEKVEQI…SGRGAALVSA (445 aa). Positions 67 to 203 are hexokinase small subdomain; it reads EGSEVGDFLS…DFEMDVVAMV (137 aa). 78-83 is an ATP binding site; that stretch reads DLGGTN. Substrate-binding positions include 151–152, 168–169, and 204–205; these read SF, TK, and ND. Residues 204–443 form a hexokinase large subdomain region; the sequence is NDTVATMISC…CEITFIESEE (240 aa). An ATP-binding site is contributed by Thr-228. Substrate-binding residues include Asn-231, Glu-256, and Glu-290. ATP-binding positions include 295–296, 332–336, and 411–415; these read GK, TRFVS, and SVYKL.

This sequence belongs to the hexokinase family. As to quaternary structure, monomer. Interacts with MIDN; the interaction occurs preferentially at low glucose levels and results in inhibition of hexokinase activity. Interacts with GCKR; leading to sequestration in the nucleus. Expression is restricted to the liver and pancreatic islets (at protein level).

Its subcellular location is the cytoplasm. The protein resides in the nucleus. The protein localises to the mitochondrion. The enzyme catalyses a D-hexose + ATP = a D-hexose 6-phosphate + ADP + H(+). It catalyses the reaction D-fructose + ATP = D-fructose 6-phosphate + ADP + H(+). The catalysed reaction is D-glucose + ATP = D-glucose 6-phosphate + ADP + H(+). It carries out the reaction D-mannose + ATP = D-mannose 6-phosphate + ADP + H(+). Its pathway is carbohydrate metabolism; hexose metabolism. It participates in carbohydrate degradation; glycolysis; D-glyceraldehyde 3-phosphate and glycerone phosphate from D-glucose: step 1/4. Subject to allosteric regulation. Low glucose and high fructose-6-phosphate triggers association with the inhibitor GCKR followed by sequestration in the nucleus. Functionally, catalyzes the phosphorylation of hexose, such as D-glucose, D-fructose and D-mannose, to hexose 6-phosphate (D-glucose 6-phosphate, D-fructose 6-phosphate and D-mannose 6-phosphate, respectively). Compared to other hexokinases, has a weak affinity for D-glucose, and is effective only when glucose is abundant. Mainly expressed in pancreatic beta cells and the liver and constitutes a rate-limiting step in glucose metabolism in these tissues. Since insulin secretion parallels glucose metabolism and the low glucose affinity of GCK ensures that it can change its enzymatic activity within the physiological range of glucose concentrations, GCK acts as a glucose sensor in the pancreatic beta cell. In pancreas, plays an important role in modulating insulin secretion. In liver, helps to facilitate the uptake and conversion of glucose by acting as an insulin-sensitive determinant of hepatic glucose usage. Required to provide D-glucose 6-phosphate for the synthesis of glycogen. Mediates the initial step of glycolysis by catalyzing phosphorylation of D-glucose to D-glucose 6-phosphate. In Rattus norvegicus (Rat), this protein is Hexokinase-4.